Here is a 229-residue protein sequence, read N- to C-terminus: Prolactin (229 aa).

The N-terminal stretch at 1-30 is a signal peptide; sequence MDSKGSSQKGSRLLLLLVVSNLLLCQGVVS. Residues C34 and C41 are joined by a disulfide bond. S56, S64, and S120 each carry phosphoserine. Cystine bridges form between C88–C204 and C221–C229.

It belongs to the somatotropin/prolactin family. In terms of assembly, interacts with PRLR.

It localises to the secreted. In terms of biological role, prolactin acts primarily on the mammary gland by promoting lactation. The protein is Prolactin (PRL) of Bos taurus (Bovine).